A 234-amino-acid chain; its full sequence is Orotidine 5'-phosphate decarboxylase (234 aa).

Substrate contacts are provided by residues D14, K36, 63–72 (DLKFHDIPNT), T123, R184, Q193, G213, and R214. Residue K65 is the Proton donor of the active site.

The protein belongs to the OMP decarboxylase family. Type 1 subfamily. Homodimer.

It catalyses the reaction orotidine 5'-phosphate + H(+) = UMP + CO2. Its pathway is pyrimidine metabolism; UMP biosynthesis via de novo pathway; UMP from orotate: step 2/2. In terms of biological role, catalyzes the decarboxylation of orotidine 5'-monophosphate (OMP) to uridine 5'-monophosphate (UMP). This is Orotidine 5'-phosphate decarboxylase from Pseudoalteromonas translucida (strain TAC 125).